The following is a 43-amino-acid chain: Potassium channel toxin gamma-KTx 4.7 (43 aa).

4 disulfides stabilise this stretch: cysteine 5-cysteine 23, cysteine 11-cysteine 34, cysteine 20-cysteine 39, and cysteine 24-cysteine 41.

It belongs to the ergtoxin family. Gamma-KTx 4 subfamily. As to expression, expressed by the venom gland.

Its subcellular location is the secreted. Functionally, reversibly blocks Kv11/ERG potassium channels. The sequence is that of Potassium channel toxin gamma-KTx 4.7 from Centruroides limpidus (Mexican scorpion).